Consider the following 316-residue polypeptide: Ribosomal RNA small subunit methyltransferase H (316 aa).

Residues 35-37, Asp-55, Phe-84, Asp-105, and Gln-112 each bind S-adenosyl-L-methionine; that span reads AGH.

It belongs to the methyltransferase superfamily. RsmH family.

Its subcellular location is the cytoplasm. The enzyme catalyses cytidine(1402) in 16S rRNA + S-adenosyl-L-methionine = N(4)-methylcytidine(1402) in 16S rRNA + S-adenosyl-L-homocysteine + H(+). Its function is as follows. Specifically methylates the N4 position of cytidine in position 1402 (C1402) of 16S rRNA. This Streptococcus pneumoniae (strain Taiwan19F-14) protein is Ribosomal RNA small subunit methyltransferase H.